Reading from the N-terminus, the 53-residue chain is UPF0391 membrane protein azo1750 (53 aa).

2 helical membrane-spanning segments follow: residues 6–26 (VIFL…IAAG) and 30–50 (IAKI…VLGM).

It belongs to the UPF0391 family.

It localises to the cell membrane. The polypeptide is UPF0391 membrane protein azo1750 (Azoarcus sp. (strain BH72)).